The chain runs to 194 residues: Small ribosomal subunit protein uS4c (194 aa).

The S4 RNA-binding domain maps to 82–143 (MRLDNILFRL…KERSKVLIQN (62 aa)).

The protein belongs to the universal ribosomal protein uS4 family. In terms of assembly, part of the 30S ribosomal subunit. Contacts protein S5. The interaction surface between S4 and S5 is involved in control of translational fidelity.

It localises to the plastid. The protein resides in the chloroplast. Its function is as follows. One of the primary rRNA binding proteins, it binds directly to 16S rRNA where it nucleates assembly of the body of the 30S subunit. Functionally, with S5 and S12 plays an important role in translational accuracy. The sequence is that of Small ribosomal subunit protein uS4c (rps4) from Trimezia steyermarkii (Steyermark's trimezia).